Here is a 314-residue protein sequence, read N- to C-terminus: 2,3-dihydroxyphenylpropionate/2,3-dihydroxicinnamic acid 1,2-dioxygenase 1 (314 aa).

The active-site Proton donor is H115. The active-site Proton acceptor is the H179.

Belongs to the LigB/MhpB extradiol dioxygenase family. Homotetramer. It depends on Fe(2+) as a cofactor.

It catalyses the reaction 3-(2,3-dihydroxyphenyl)propanoate + O2 = (2Z,4E)-2-hydroxy-6-oxonona-2,4-dienedioate + H(+). The catalysed reaction is (2E)-3-(2,3-dihydroxyphenyl)prop-2-enoate + O2 = (2Z,4E,7E)-2-hydroxy-6-oxonona-2,4,7-trienedioate + H(+). The protein operates within aromatic compound metabolism; 3-phenylpropanoate degradation. Functionally, catalyzes the non-heme iron(II)-dependent oxidative cleavage of 2,3-dihydroxyphenylpropionic acid and 2,3-dihydroxicinnamic acid into 2-hydroxy-6-ketononadienedioate and 2-hydroxy-6-ketononatrienedioate, respectively. The chain is 2,3-dihydroxyphenylpropionate/2,3-dihydroxicinnamic acid 1,2-dioxygenase 1 from Pseudomonas putida (Arthrobacter siderocapsulatus).